A 90-amino-acid polypeptide reads, in one-letter code: Auxin-responsive protein SAUR22 (90 aa).

Belongs to the ARG7 family.

It is found in the cell membrane. In terms of biological role, functions as a positive effector of cell expansion through modulation of auxin transport. The sequence is that of Auxin-responsive protein SAUR22 from Arabidopsis thaliana (Mouse-ear cress).